The sequence spans 304 residues: Oxygen-dependent coproporphyrinogen-III oxidase (304 aa).

Residue Ser-94 participates in substrate binding. A divalent metal cation is bound by residues His-98 and His-108. The Proton donor role is filled by His-108. A substrate-binding site is contributed by Asn-110–Arg-112. Positions 147 and 177 each coordinate a divalent metal cation. The important for dimerization stretch occupies residues Tyr-242–Gln-277. Residue Gly-260–Arg-262 participates in substrate binding.

It belongs to the aerobic coproporphyrinogen-III oxidase family. Homodimer. Requires a divalent metal cation as cofactor.

It is found in the cytoplasm. The catalysed reaction is coproporphyrinogen III + O2 + 2 H(+) = protoporphyrinogen IX + 2 CO2 + 2 H2O. It functions in the pathway porphyrin-containing compound metabolism; protoporphyrin-IX biosynthesis; protoporphyrinogen-IX from coproporphyrinogen-III (O2 route): step 1/1. In terms of biological role, involved in the heme biosynthesis. Catalyzes the aerobic oxidative decarboxylation of propionate groups of rings A and B of coproporphyrinogen-III to yield the vinyl groups in protoporphyrinogen-IX. This Sodalis glossinidius (strain morsitans) protein is Oxygen-dependent coproporphyrinogen-III oxidase.